Consider the following 596-residue polypeptide: Succinate dehydrogenase flavoprotein subunit (596 aa).

FAD is bound by residues 18-23, 41-56, and aspartate 225; these read GAGGAG and TKLF…AQGG. Tele-8alpha-FAD histidine is present on histidine 49. Residues histidine 246 and threonine 258 each coordinate substrate. Catalysis depends on arginine 290, which acts as the Proton acceptor. Residue histidine 357 participates in substrate binding. Glutamate 391 contributes to the FAD binding site. Arginine 402 contacts substrate. 407–408 lines the FAD pocket; that stretch reads SL.

This sequence belongs to the FAD-dependent oxidoreductase 2 family. FRD/SDH subfamily. As to quaternary structure, part of an enzyme complex containing four subunits: a flavoprotein, an iron-sulfur, cytochrome b-556, and a hydrophobic anchor protein. FAD serves as cofactor.

It localises to the cell inner membrane. The enzyme catalyses a quinone + succinate = fumarate + a quinol. It functions in the pathway carbohydrate metabolism; tricarboxylic acid cycle; fumarate from succinate (bacterial route): step 1/1. The polypeptide is Succinate dehydrogenase flavoprotein subunit (sdhA) (Rickettsia felis (strain ATCC VR-1525 / URRWXCal2) (Rickettsia azadi)).